The following is a 936-amino-acid chain: Altered inheritance of mitochondria protein 3 (936 aa).

Disordered regions lie at residues 1–315 (MGFW…LNQN), 341–795 (MSST…EATG), 818–893 (NLEK…KSLE), and 908–936 (SAADDNLNPFERYKRNVVPQEDDRLHKLK). Positions 36 to 54 (ASKKHYNNSKARRERKSGK) are enriched in basic residues. Serine 57, serine 58, and serine 64 each carry phosphoserine. The segment covering 59-68 (DEEYESEDEM) has biased composition (acidic residues). The span at 69–84 (EHERKPTDIRSLKDPK) shows a compositional bias: basic and acidic residues. Composition is skewed to low complexity over residues 93–105 (PGQKTYTGQQQQQ) and 130–152 (QSQYAQPQYNQYPQQQLQQGVMP). Positions 166 to 244 (GSNSNATSYQ…YVSHGSTNLG (79 aa)) are enriched in polar residues. Low complexity-rich tracts occupy residues 245–267 (QSQFPSGQQQQPTTQFGQQVLPS) and 306–315 (QQQQQPLNQN). Residues 341–354 (MSSTTNMQDSNPSY) are compositionally biased toward polar residues. The segment covering 366–382 (GGQPPVPVRMQPQPPQP) has biased composition (pro residues). Polar residues predominate over residues 453-462 (IQPNTTSSAA). At serine 463 the chain carries Phosphoserine. Composition is skewed to basic and acidic residues over residues 475 to 489 (DNERNSGNKENDEST), 513 to 528 (HGLDSVPSEHTRKNAS), and 598 to 615 (EIKDEVLPGHPSEEDRNV). Composition is skewed to low complexity over residues 622 to 632 (QSKSQSQSQSQ) and 656 to 665 (SQSSNSSDSS). The residue at position 718 (threonine 718) is a Phosphothreonine. Over residues 738–748 (DSSKDANKYEK) the composition is skewed to basic and acidic residues. Over residues 752-763 (PVTSSIQAQQST) the composition is skewed to polar residues. Position 850 is a phosphothreonine (threonine 850). Residues 851–868 (PPRPPPSRSSPKKVPPVV) show a composition bias toward pro residues. Residues 877 to 888 (KKPPVVPKKKPL) show a composition bias toward basic residues.

It belongs to the AIM3 family. Interacts with RVS167.

It is found in the membrane raft. This is Altered inheritance of mitochondria protein 3 (AIM3) from Saccharomyces cerevisiae (strain RM11-1a) (Baker's yeast).